We begin with the raw amino-acid sequence, 285 residues long: Cell division protein DivIB (285 aa).

Residues 1 to 19 are compositionally biased toward basic and acidic residues; the sequence is MNEKNKNDESKHQEDKLQD. Residues 1–20 form a disordered region; it reads MNEKNKNDESKHQEDKLQDQ. Residues 1 to 66 lie on the Cytoplasmic side of the membrane; the sequence is MNEKNKNDES…NRFNAMERNS (66 aa). Residues 67–87 form a helical membrane-spanning segment; sequence IHMIVILSIISLLLILLLSPL. A POTRA domain is found at 88 to 158; it reads MRFQKVEITG…QVAQIKIEEN (71 aa). Over 88–285 the chain is Extracellular; that stretch reads MRFQKVEITG…FQVGTYFQQY (198 aa).

This sequence belongs to the FtsQ/DivIB family. DivIB subfamily.

The protein resides in the cell membrane. Cell division protein that may be involved in stabilizing or promoting the assembly of the division complex. This is Cell division protein DivIB from Weissella koreensis (strain KACC 15510).